Consider the following 476-residue polypeptide: Cysteine--tRNA ligase (476 aa).

C31 lines the Zn(2+) pocket. The 'HIGH' region signature appears at 33–43 (PTVYNYAHIGN). Residues C211, H236, and E240 each contribute to the Zn(2+) site. Residues 269–273 (KMSKS) carry the 'KMSKS' region motif. K272 is an ATP binding site.

It belongs to the class-I aminoacyl-tRNA synthetase family. In terms of assembly, monomer. Zn(2+) serves as cofactor.

It is found in the cytoplasm. The enzyme catalyses tRNA(Cys) + L-cysteine + ATP = L-cysteinyl-tRNA(Cys) + AMP + diphosphate. The sequence is that of Cysteine--tRNA ligase from Xanthomonas euvesicatoria pv. vesicatoria (strain 85-10) (Xanthomonas campestris pv. vesicatoria).